A 362-amino-acid polypeptide reads, in one-letter code: UDP-N-acetylglucosamine--N-acetylmuramyl-(pentapeptide) pyrophosphoryl-undecaprenol N-acetylglucosamine transferase (362 aa).

Residues 21–23 (TGG), N129, R170, S198, and Q290 contribute to the UDP-N-acetyl-alpha-D-glucosamine site.

It belongs to the glycosyltransferase 28 family. MurG subfamily.

The protein resides in the cell inner membrane. The enzyme catalyses di-trans,octa-cis-undecaprenyl diphospho-N-acetyl-alpha-D-muramoyl-L-alanyl-D-glutamyl-meso-2,6-diaminopimeloyl-D-alanyl-D-alanine + UDP-N-acetyl-alpha-D-glucosamine = di-trans,octa-cis-undecaprenyl diphospho-[N-acetyl-alpha-D-glucosaminyl-(1-&gt;4)]-N-acetyl-alpha-D-muramoyl-L-alanyl-D-glutamyl-meso-2,6-diaminopimeloyl-D-alanyl-D-alanine + UDP + H(+). It participates in cell wall biogenesis; peptidoglycan biosynthesis. Its function is as follows. Cell wall formation. Catalyzes the transfer of a GlcNAc subunit on undecaprenyl-pyrophosphoryl-MurNAc-pentapeptide (lipid intermediate I) to form undecaprenyl-pyrophosphoryl-MurNAc-(pentapeptide)GlcNAc (lipid intermediate II). This chain is UDP-N-acetylglucosamine--N-acetylmuramyl-(pentapeptide) pyrophosphoryl-undecaprenol N-acetylglucosamine transferase, found in Synechococcus sp. (strain JA-3-3Ab) (Cyanobacteria bacterium Yellowstone A-Prime).